A 223-amino-acid polypeptide reads, in one-letter code: ATP synthase subunit a 1 (223 aa).

Transmembrane regions (helical) follow at residues Leu20 to Ser40, Tyr78 to Ile98, Leu108 to Ala128, Met174 to Leu194, and Leu196 to Ala216.

Belongs to the ATPase A chain family. As to quaternary structure, F-type ATPases have 2 components, CF(1) - the catalytic core - and CF(0) - the membrane proton channel. CF(1) has five subunits: alpha(3), beta(3), gamma(1), delta(1), epsilon(1). CF(0) has four main subunits: a, b, b' and c.

The protein localises to the cell inner membrane. Its function is as follows. Key component of the proton channel; it plays a direct role in the translocation of protons across the membrane. This Chlorobium luteolum (strain DSM 273 / BCRC 81028 / 2530) (Pelodictyon luteolum) protein is ATP synthase subunit a 1.